A 517-amino-acid chain; its full sequence is Ascochitine biosynthesis cluster MFS transporter (517 aa).

Residues 1–12 (MSPDSRDPEAQR) show a composition bias toward basic and acidic residues. The segment at 1–45 (MSPDSRDPEAQRDVGLTKNTSSVNIPLESVKTDKTSNASPIMGPG) is disordered. The N-linked (GlcNAc...) asparagine glycan is linked to Asn19. 12 helical membrane passes run 75 to 95 (WVIT…STIF), 111 to 131 (VVMT…PLIW), 141 to 161 (LTPF…VGVA), 172 to 192 (FFIG…LADI), 204 to 224 (VYAA…GFVV), 232 to 252 (WTAW…LVFV), 308 to 328 (ILLL…LFFV), 347 to 367 (ALPL…ILFV), 390 to 410 (LMMV…WTSS), 421 to 441 (AGFP…SFLI), 457 to 475 (LIRS…PMYH), and 485 to 505 (LLGF…YYGP).

Belongs to the major facilitator superfamily. CAR1 family.

Its subcellular location is the membrane. In terms of biological role, MFS transporter; part of the gene cluster that mediates the biosynthesis the mycotoxin ascochitine, an o-quinone methide that plays a possible protective role against other microbial competitors in nature and is considered to be important for pathogenicity of legume-associated Didymella species. The chain is Ascochitine biosynthesis cluster MFS transporter from Didymella fabae (Leaf and pod spot disease fungus).